The following is a 1275-amino-acid chain: Mediator of RNA polymerase II transcription subunit 33B (1275 aa).

The segment covering Gly-772–Asp-791 has biased composition (low complexity). The disordered stretch occupies residues Gly-772–Asp-792.

The protein belongs to the Mediator complex subunit 33 family. Component of the Mediator complex. As to expression, ubiquitous.

Its subcellular location is the nucleus. Component of the Mediator complex, a coactivator involved in the regulated transcription of nearly all RNA polymerase II-dependent genes. Mediator functions as a bridge to convey information from gene-specific regulatory proteins to the basal RNA polymerase II transcription machinery. The Mediator complex, having a compact conformation in its free form, is recruited to promoters by direct interactions with regulatory proteins and serves for the assembly of a functional preinitiation complex with RNA polymerase II and the general transcription factors. Involved in the repression of phenylpropanoid biosynthesis. May compete with MED33B for common binding partners or for occupancy in Mediator. The protein is Mediator of RNA polymerase II transcription subunit 33B (MED33B) of Arabidopsis thaliana (Mouse-ear cress).